Reading from the N-terminus, the 188-residue chain is Dual specificity protein phosphatase 18 (188 aa).

One can recognise a Tyrosine-protein phosphatase domain in the interval 19–160 (GLSQITKSLF…LIHYELQLFG (142 aa)). The interval 95–141 (MQKGRTLLHCAAGVSRSAALCLAYLMKYHAMSLVDAHTWTKSCRPII) is sufficient for mitochondrial localization. The Phosphocysteine intermediate role is filled by cysteine 104.

This sequence belongs to the protein-tyrosine phosphatase family. Non-receptor class dual specificity subfamily.

The protein localises to the cytoplasm. Its subcellular location is the nucleus. The protein resides in the mitochondrion inner membrane. The catalysed reaction is O-phospho-L-tyrosyl-[protein] + H2O = L-tyrosyl-[protein] + phosphate. It carries out the reaction O-phospho-L-seryl-[protein] + H2O = L-seryl-[protein] + phosphate. The enzyme catalyses O-phospho-L-threonyl-[protein] + H2O = L-threonyl-[protein] + phosphate. Can dephosphorylate single and diphosphorylated synthetic MAPK peptides, with preference for the phosphotyrosine and diphosphorylated forms over phosphothreonine. In vitro, dephosphorylates p-nitrophenyl phosphate (pNPP). This Mus musculus (Mouse) protein is Dual specificity protein phosphatase 18 (Dusp18).